Consider the following 455-residue polypeptide: O-acyltransferase pigD (455 aa).

The protein belongs to the trichothecene 3-O-acetyltransferase family.

It participates in secondary metabolite biosynthesis. In terms of biological role, O-acetyltransferase; part of the gene cluster that mediates the biosynthesis of azaphilone pigments (MonAzPs), a complex mixture of compounds with a common azaphilone skeleton very widely used as food colorants. Within the pathway, pigD directly transfers the fatty acyl chain from the beta-ketoacyl-ACP produced by the pigJ-pigK fatty acid synthase (FAS) to the C-4 alcohol. The first step of the pathway is performed by the nrPKS pigA that forms the hexaketide precursor from successive condensations of five malonyl-CoA units, with a simple acetyl-CoA starter unit. The role of esterase pigG is not clear, but it may play at most a supplementary role in the formation of the benzaldehyde produced by the pigA nrPKS. This very reactive benzaldehyde is intercepted by the pigC ketoreductase that to provide the first stable enzyme-free MonAzPs intermediate, 6-(4-hydroxy-2-oxopentyl)-3-methyl-2,4-dioxocyclohexane carbaldehyde, also known as M7PKS-1. The FAD-dependent monooxygenase pigN hydroxylates M7PKS-1 at C-4, which triggers the formation of the pyran ring. PigJ, pigK and pigD are involved in the acetylation of the pyran ring. PigJ and pigK form the two subunits of a dedicated fungal FAS that produces the side chain fatty acyl moiety of MonAzPs and pigD transfers the fatty acyl chain to the C-4 alcohol. PigM and pigO are involved in the elimination of the omega-1 alcohol. PigM acts as an O-acetyltransferase that synthesizes the putative O-11 acetyl intermediate whereas pigO eliminates acetic acid to yield an intermediate with a C10(11) double bond. The dehydration of the C-11 alcohol followed by the reduction of the C6(7) double bond by the NAD(P)H-dependent oxidoreductase pigE increases the electrophilicity of the C-5 ketone of the resulting acyl benzopyran. This in turn sets up the C-5 ketone for an intramolecular Knoevenagel aldol condensation with the C-20 enol of the side chain. This condensation affords the characteristic linear tricyclic carbon skeletons of the yellow pigments that serve as the common precursors for the classical yellow pigments monascin and ankaflavin, orange pigments rubopunctatin and monascorubrin, and red pigments ribropunctamine and monascorubramine. The FAD-dependent oxidoreductase pigF is especially invoved in the biosynthesis of orange and red pigments via desaturation of C6(7). This Monascus ruber (Mold) protein is O-acyltransferase pigD.